The following is a 351-amino-acid chain: Protein Wnt-8a (351 aa).

The signal sequence occupies residues 1-24 (MGNLFMLWAALGICCAAFSASAWS). C54 and C65 are disulfide-bonded. Residue N103 is glycosylated (N-linked (GlcNAc...) asparagine). 10 cysteine pairs are disulfide-bonded: C104/C112, C114/C132, C180/C194, C182/C189, C259/C297, C275/C290, C294/C336, C312/C327, C314/C324, and C319/C320. S186 carries the O-palmitoleoyl serine lipid modification. 2 N-linked (GlcNAc...) asparagine glycosylation sites follow: N262 and N281.

The protein belongs to the Wnt family. In terms of assembly, forms a soluble 1:1 complex with AFM; this prevents oligomerization and is required for prolonged biological activity. The complex with AFM may represent the physiological form in body fluids. In terms of processing, palmitoleoylation is required for efficient binding to frizzled receptors. Depalmitoleoylation leads to Wnt signaling pathway inhibition. Proteolytic processing by TIKI1 and TIKI2 promotes oxidation and formation of large disulfide-bond oligomers, leading to inactivation of WNT8A.

The protein resides in the secreted. The protein localises to the extracellular space. It is found in the extracellular matrix. In terms of biological role, ligand for members of the frizzled family of seven transmembrane receptors. Plays a role in embryonic patterning. The chain is Protein Wnt-8a (WNT8A) from Homo sapiens (Human).